The primary structure comprises 553 residues: Glutamate--tRNA ligase (553 aa).

The 'HIGH' region motif lies at 98–108; that stretch reads PNPSGPLHIGH.

It belongs to the class-I aminoacyl-tRNA synthetase family. Glutamate--tRNA ligase type 2 subfamily.

It is found in the cytoplasm. The enzyme catalyses tRNA(Glu) + L-glutamate + ATP = L-glutamyl-tRNA(Glu) + AMP + diphosphate. In terms of biological role, catalyzes the attachment of glutamate to tRNA(Glu) in a two-step reaction: glutamate is first activated by ATP to form Glu-AMP and then transferred to the acceptor end of tRNA(Glu). The protein is Glutamate--tRNA ligase of Methanocaldococcus jannaschii (strain ATCC 43067 / DSM 2661 / JAL-1 / JCM 10045 / NBRC 100440) (Methanococcus jannaschii).